The primary structure comprises 223 residues: Ras-related protein Rab-37 (223 aa).

Over residues 1 to 13 (MTGTPGAATAGDG) the composition is skewed to low complexity. Positions 1–22 (MTGTPGAATAGDGEAPERSPPF) are disordered. An N-acetylthreonine modification is found at threonine 2. GTP-binding residues include serine 38, glycine 39, valine 40, glycine 41, lysine 42, threonine 43, cysteine 44, and threonine 62. Threonine 43 serves as a coordination point for Mg(2+). 2 short sequence motifs (switch) span residues 52–67 (GAFLSGTFIATVGIDS) and 85–102 (DTAGQERFRSVTHAYYRD). Threonine 62 and aspartate 85 together coordinate Mg(2+). The GTP site is built by glycine 88, asparagine 143, lysine 144, aspartate 146, serine 173, alanine 174, and lysine 175. S-geranylgeranyl cysteine attachment occurs at residues cysteine 219 and cysteine 220. Cysteine 220 carries the post-translational modification Cysteine methyl ester. The propeptide at 221–223 (SFV) is removed in mature form.

The protein belongs to the small GTPase superfamily. Rab family. In terms of assembly, interacts with RIMS1. Interacts (in GDP-bound form) with RPGR, RPGR functions as guanine exchange factor (GEF). Mg(2+) is required as a cofactor. Expressed in the retina (at protein level). Specifically expressed in the bone marrow mast cells.

It localises to the cytoplasmic vesicle. The protein resides in the cell projection. It is found in the cilium. It catalyses the reaction GTP + H2O = GDP + phosphate + H(+). Regulated by guanine nucleotide exchange factors (GEFs) including RPGR which promote the exchange of bound GDP for free GTP. Regulated by GTPase activating proteins (GAPs) which increase the GTP hydrolysis activity. Inhibited by GDP dissociation inhibitors (GDIs). The small GTPases Rab are key regulators of intracellular membrane trafficking, from the formation of transport vesicles to their fusion with membranes. Rabs cycle between an inactive GDP-bound form and an active GTP-bound form that is able to recruit to membranes different sets of downstream effectors directly responsible for vesicle formation, movement, tethering and fusion. Acts as an organizer for autophagosome biogenesis in a GTP-dependent manner. Involved in retinal homeostasis by autophagy regulation. The chain is Ras-related protein Rab-37 from Mus musculus (Mouse).